The primary structure comprises 116 residues: Ribosome-binding factor A (116 aa).

Belongs to the RbfA family. As to quaternary structure, monomer. Binds 30S ribosomal subunits, but not 50S ribosomal subunits or 70S ribosomes.

Its subcellular location is the cytoplasm. Its function is as follows. One of several proteins that assist in the late maturation steps of the functional core of the 30S ribosomal subunit. Associates with free 30S ribosomal subunits (but not with 30S subunits that are part of 70S ribosomes or polysomes). Required for efficient processing of 16S rRNA. May interact with the 5'-terminal helix region of 16S rRNA. The chain is Ribosome-binding factor A from Streptococcus pyogenes serotype M5 (strain Manfredo).